The sequence spans 66 residues: Protein I177L (66 aa).

It belongs to the asfivirus I177L family.

It localises to the virion. The sequence is that of Protein I177L from Ornithodoros (relapsing fever ticks).